A 196-amino-acid chain; its full sequence is MQLKRVAEANLPTPWGDFLMVGFEEVATGQDHVALVFGDISGQTPVLARVHSECLTGDALFSLRCDCGFQLEAALSQIAEEGRGILLYHRQEGRNIGLLNKIRAYALQDQGYDTVEANHQLGFAADERDFTLCADMFKLLGVDEVRLLTNNPRKVEILTEAGINIVERVSLIVGRNPKNEHYLDTKAAKMGHLLSE.

Residue R49–E53 coordinates GTP. C54, C65, and C67 together coordinate Zn(2+). Residues Q70, E92–R94, and T114 each bind GTP. D126 functions as the Proton acceptor in the catalytic mechanism. The Nucleophile role is filled by R128. Residues T149 and K154 each contribute to the GTP site.

This sequence belongs to the GTP cyclohydrolase II family. As to quaternary structure, homodimer. Zn(2+) is required as a cofactor.

It carries out the reaction GTP + 4 H2O = 2,5-diamino-6-hydroxy-4-(5-phosphoribosylamino)-pyrimidine + formate + 2 phosphate + 3 H(+). It functions in the pathway cofactor biosynthesis; riboflavin biosynthesis; 5-amino-6-(D-ribitylamino)uracil from GTP: step 1/4. Its function is as follows. Catalyzes the conversion of GTP to 2,5-diamino-6-ribosylamino-4(3H)-pyrimidinone 5'-phosphate (DARP), formate and pyrophosphate. The protein is GTP cyclohydrolase-2 of Enterobacter sp. (strain 638).